The primary structure comprises 380 residues: Peptide chain release factor 1-like, mitochondrial (380 aa).

Residues 1 to 26 (MRSRVLWGAARWLWPRRAVGPARRPL) constitute a mitochondrion transit peptide. A coiled-coil region spans residues 63–117 (ELLAVIKLLNEKERELRETEHLLHDENEDLRKLAENEITLCQKEITQLKHQIILL). The segment at 236 to 300 (PKDLRIDTKR…LRAKLYSMHL (65 aa)) is GGQ domain. The short motif at 250-252 (GGQ) is the GGQ element. Residue Gln-252 is modified to N5-methylglutamine.

Belongs to the prokaryotic/mitochondrial release factor family. Methylation of glutamine in the GGQ triplet by HEMK1 is conserved from bacteria to mammals. As to expression, expressed in skeletal muscle (at protein level).

The protein localises to the mitochondrion. Its function is as follows. Mitochondrial peptide chain release factor that directs the termination of translation in response to the peptide chain termination codons UAA and UAG. In Homo sapiens (Human), this protein is Peptide chain release factor 1-like, mitochondrial.